We begin with the raw amino-acid sequence, 1402 residues long: Baculoviral IAP repeat-containing protein 1g (1402 aa).

BIR repeat units follow at residues 60–127 (EAKR…CEFL), 159–227 (EEAR…CEFL), and 278–345 (EELR…CVFL). Residues Cys315, Cys318, His335, and Cys342 each coordinate Zn(2+). Positions 464-759 (SVMCVEGEAG…EFLAAVRLTE (296 aa)) constitute an NACHT domain. An ATP-binding site is contributed by Lys476.

Functionally, prevents motor-neuron apoptosis induced by a variety of signals. The chain is Baculoviral IAP repeat-containing protein 1g (Naip7) from Mus musculus (Mouse).